The chain runs to 299 residues: MPASKPLLIALLGPTASGKTCLALQLAEQLKLSVLNVDSRQLYIGMDVGTAKPTKEQQRRVQHHLIDLRRPDQPITLQEFQAAAQLILAQKLREQNMPFLVGGSGLYLKALTCGLRPPAVPPQPELRKQLGELGQRTCHHLLQAADPTAANRISPADAMRTQRGLEVVYATGKPITTQQGSSPPPWRVLELGLDPHNLRERIGHRTTQLYANGLIEETEHLSHCYDTDLPLLQTIGYGEALKVIQGLLNREQAIALTTRRTQQFAKRQRTWFRRQHHPYWLKGEEPLSEALSLIQAGLR.

Glycine 13–threonine 20 contacts ATP. Position 15 to 20 (threonine 15 to threonine 20) interacts with substrate. The tract at residues aspartate 38–glutamine 41 is interaction with substrate tRNA.

It belongs to the IPP transferase family. Monomer. The cofactor is Mg(2+).

The enzyme catalyses adenosine(37) in tRNA + dimethylallyl diphosphate = N(6)-dimethylallyladenosine(37) in tRNA + diphosphate. Functionally, catalyzes the transfer of a dimethylallyl group onto the adenine at position 37 in tRNAs that read codons beginning with uridine, leading to the formation of N6-(dimethylallyl)adenosine (i(6)A). The sequence is that of tRNA dimethylallyltransferase from Prochlorococcus marinus (strain MIT 9313).